Here is a 229-residue protein sequence, read N- to C-terminus: Cytochrome c oxidase subunit 2 (229 aa).

Residues 1 to 14 (MAQQAQLGLQDAAS) lie on the Mitochondrial intermembrane side of the membrane. The chain crosses the membrane as a helical span at residues 15 to 45 (PIMEELIHFHDHTLTVVFLISVLIFYLIIVM). Over 46-59 (VTTTFMNKHSLDSQ) the chain is Mitochondrial matrix. The chain crosses the membrane as a helical span at residues 60–87 (EVEIVWTVMPAIVLITIALPSLRILYLT). Residues 88–229 (DEISNPHLTI…ENWTTKVLAS (142 aa)) lie on the Mitochondrial intermembrane side of the membrane. 6 residues coordinate Cu cation: His161, Cys196, Glu198, Cys200, His204, and Met207. Residue Glu198 coordinates Mg(2+).

This sequence belongs to the cytochrome c oxidase subunit 2 family. As to quaternary structure, component of the cytochrome c oxidase (complex IV, CIV), a multisubunit enzyme composed of 14 subunits. The complex is composed of a catalytic core of 3 subunits MT-CO1, MT-CO2 and MT-CO3, encoded in the mitochondrial DNA, and 11 supernumerary subunits COX4I, COX5A, COX5B, COX6A, COX6B, COX6C, COX7A, COX7B, COX7C, COX8 and NDUFA4, which are encoded in the nuclear genome. The complex exists as a monomer or a dimer and forms supercomplexes (SCs) in the inner mitochondrial membrane with NADH-ubiquinone oxidoreductase (complex I, CI) and ubiquinol-cytochrome c oxidoreductase (cytochrome b-c1 complex, complex III, CIII), resulting in different assemblies (supercomplex SCI(1)III(2)IV(1) and megacomplex MCI(2)III(2)IV(2)). Found in a complex with TMEM177, COA6, COX18, COX20, SCO1 and SCO2. Interacts with TMEM177 in a COX20-dependent manner. Interacts with COX20. Interacts with COX16. Cu cation serves as cofactor.

The protein localises to the mitochondrion inner membrane. It carries out the reaction 4 Fe(II)-[cytochrome c] + O2 + 8 H(+)(in) = 4 Fe(III)-[cytochrome c] + 2 H2O + 4 H(+)(out). Its function is as follows. Component of the cytochrome c oxidase, the last enzyme in the mitochondrial electron transport chain which drives oxidative phosphorylation. The respiratory chain contains 3 multisubunit complexes succinate dehydrogenase (complex II, CII), ubiquinol-cytochrome c oxidoreductase (cytochrome b-c1 complex, complex III, CIII) and cytochrome c oxidase (complex IV, CIV), that cooperate to transfer electrons derived from NADH and succinate to molecular oxygen, creating an electrochemical gradient over the inner membrane that drives transmembrane transport and the ATP synthase. Cytochrome c oxidase is the component of the respiratory chain that catalyzes the reduction of oxygen to water. Electrons originating from reduced cytochrome c in the intermembrane space (IMS) are transferred via the dinuclear copper A center (CU(A)) of subunit 2 and heme A of subunit 1 to the active site in subunit 1, a binuclear center (BNC) formed by heme A3 and copper B (CU(B)). The BNC reduces molecular oxygen to 2 water molecules using 4 electrons from cytochrome c in the IMS and 4 protons from the mitochondrial matrix. The polypeptide is Cytochrome c oxidase subunit 2 (MT-CO2) (Petromyzon marinus (Sea lamprey)).